Reading from the N-terminus, the 199-residue chain is MYETYHSGWIECITGSMFSGKSEELIRRLRRGLYAKQKVVVFKPAIDDRYHKDKIVSHNGNAIEAINISTAAEILKHDLSEVDVIGIDEVQFFENGIVHIAEQLAEKGHRVITAGLDMDFRAQPFEPMPQLMAVSEDVTKLQAVCAVCGASSSRTQRLIDGNPAKIDDPVILVGANESYEPRCRAHHIVAPSNTEKEEM.

Residues 15–22 (GSMFSGKS) and 88–91 (DEVQ) each bind ATP. Residue Glu-89 is the Proton acceptor of the active site. Zn(2+)-binding residues include Cys-145, Cys-148, Cys-183, and His-186.

Belongs to the thymidine kinase family. As to quaternary structure, homotetramer.

The protein resides in the cytoplasm. The catalysed reaction is thymidine + ATP = dTMP + ADP + H(+). This Staphylococcus saprophyticus subsp. saprophyticus (strain ATCC 15305 / DSM 20229 / NCIMB 8711 / NCTC 7292 / S-41) protein is Thymidine kinase.